The primary structure comprises 448 residues: Histidinol dehydrogenase (448 aa).

Residues Tyr-136, Gln-197, and Asn-220 each coordinate NAD(+). Residues Ser-243, Gln-265, and His-268 each contribute to the substrate site. Zn(2+) contacts are provided by Gln-265 and His-268. Residues Glu-333 and His-334 each act as proton acceptor in the active site. The substrate site is built by His-334, Asp-367, Glu-421, and His-426. Asp-367 contacts Zn(2+). Residue His-426 coordinates Zn(2+).

Belongs to the histidinol dehydrogenase family. The cofactor is Zn(2+).

It catalyses the reaction L-histidinol + 2 NAD(+) + H2O = L-histidine + 2 NADH + 3 H(+). It participates in amino-acid biosynthesis; L-histidine biosynthesis; L-histidine from 5-phospho-alpha-D-ribose 1-diphosphate: step 9/9. Functionally, catalyzes the sequential NAD-dependent oxidations of L-histidinol to L-histidinaldehyde and then to L-histidine. This Pseudomonas savastanoi pv. phaseolicola (strain 1448A / Race 6) (Pseudomonas syringae pv. phaseolicola (strain 1448A / Race 6)) protein is Histidinol dehydrogenase.